The primary structure comprises 513 residues: ATP synthase subunit alpha (513 aa).

An ATP-binding site is contributed by 169–176 (GDRQTGKT).

The protein belongs to the ATPase alpha/beta chains family. F-type ATPases have 2 components, CF(1) - the catalytic core - and CF(0) - the membrane proton channel. CF(1) has five subunits: alpha(3), beta(3), gamma(1), delta(1), epsilon(1). CF(0) has three main subunits: a(1), b(2) and c(9-12). The alpha and beta chains form an alternating ring which encloses part of the gamma chain. CF(1) is attached to CF(0) by a central stalk formed by the gamma and epsilon chains, while a peripheral stalk is formed by the delta and b chains.

The protein localises to the cell inner membrane. It catalyses the reaction ATP + H2O + 4 H(+)(in) = ADP + phosphate + 5 H(+)(out). In terms of biological role, produces ATP from ADP in the presence of a proton gradient across the membrane. The alpha chain is a regulatory subunit. The chain is ATP synthase subunit alpha from Haemophilus influenzae (strain PittEE).